We begin with the raw amino-acid sequence, 940 residues long: Leucine--tRNA ligase, mitochondrial (940 aa).

A 'HIGH' region motif is present at residues 54 to 64 (PYPSGALHMGH). A 'KMSKS' region motif is present at residues 638-642 (TINKL). Lysine 641 lines the ATP pocket. The tract at residues 724–744 (KEQHQHQQQQHQQPLPSSEFN) is disordered.

Belongs to the class-I aminoacyl-tRNA synthetase family.

Its subcellular location is the mitochondrion. The catalysed reaction is tRNA(Leu) + L-leucine + ATP = L-leucyl-tRNA(Leu) + AMP + diphosphate. This Dictyostelium discoideum (Social amoeba) protein is Leucine--tRNA ligase, mitochondrial (mleuS).